Reading from the N-terminus, the 457-residue chain is tRNA modification GTPase MnmE (457 aa).

(6S)-5-formyl-5,6,7,8-tetrahydrofolate-binding residues include Arg-25, Glu-87, and Arg-126. The TrmE-type G domain maps to 223–377; sequence GISTAIIGRP…IEERINNLFF (155 aa). Asn-233 is a binding site for K(+). Residues 233-238, 252-258, and 277-280 each bind GTP; these read NVGKSS, TDIAGTT, and DTAG. Ser-237 is a Mg(2+) binding site. K(+)-binding residues include Thr-252, Ile-254, and Thr-257. Thr-258 serves as a coordination point for Mg(2+). Lys-457 contacts (6S)-5-formyl-5,6,7,8-tetrahydrofolate.

The protein belongs to the TRAFAC class TrmE-Era-EngA-EngB-Septin-like GTPase superfamily. TrmE GTPase family. As to quaternary structure, homodimer. Heterotetramer of two MnmE and two MnmG subunits. Requires K(+) as cofactor.

The protein localises to the cytoplasm. In terms of biological role, exhibits a very high intrinsic GTPase hydrolysis rate. Involved in the addition of a carboxymethylaminomethyl (cmnm) group at the wobble position (U34) of certain tRNAs, forming tRNA-cmnm(5)s(2)U34. This is tRNA modification GTPase MnmE from Streptococcus pneumoniae (strain Hungary19A-6).